We begin with the raw amino-acid sequence, 541 residues long: 2-succinyl-5-enolpyruvyl-6-hydroxy-3-cyclohexene-1-carboxylate synthase (541 aa).

It belongs to the TPP enzyme family. MenD subfamily. As to quaternary structure, homodimer. Mg(2+) is required as a cofactor. The cofactor is Mn(2+). It depends on thiamine diphosphate as a cofactor.

The enzyme catalyses isochorismate + 2-oxoglutarate + H(+) = 5-enolpyruvoyl-6-hydroxy-2-succinyl-cyclohex-3-ene-1-carboxylate + CO2. Its pathway is quinol/quinone metabolism; 1,4-dihydroxy-2-naphthoate biosynthesis; 1,4-dihydroxy-2-naphthoate from chorismate: step 2/7. It participates in quinol/quinone metabolism; menaquinone biosynthesis. Catalyzes the thiamine diphosphate-dependent decarboxylation of 2-oxoglutarate and the subsequent addition of the resulting succinic semialdehyde-thiamine pyrophosphate anion to isochorismate to yield 2-succinyl-5-enolpyruvyl-6-hydroxy-3-cyclohexene-1-carboxylate (SEPHCHC). The sequence is that of 2-succinyl-5-enolpyruvyl-6-hydroxy-3-cyclohexene-1-carboxylate synthase from Rhodococcus jostii (strain RHA1).